The primary structure comprises 232 residues: Phosphatidylserine decarboxylase proenzyme (232 aa).

Serine 190 (schiff-base intermediate with substrate; via pyruvic acid) is an active-site residue. Position 190 is a pyruvic acid (Ser); by autocatalysis (serine 190).

The protein belongs to the phosphatidylserine decarboxylase family. PSD-A subfamily. In terms of assembly, heterodimer of a large membrane-associated beta subunit and a small pyruvoyl-containing alpha subunit. The cofactor is pyruvate. Post-translationally, is synthesized initially as an inactive proenzyme. Formation of the active enzyme involves a self-maturation process in which the active site pyruvoyl group is generated from an internal serine residue via an autocatalytic post-translational modification. Two non-identical subunits are generated from the proenzyme in this reaction, and the pyruvate is formed at the N-terminus of the alpha chain, which is derived from the carboxyl end of the proenzyme. The post-translation cleavage follows an unusual pathway, termed non-hydrolytic serinolysis, in which the side chain hydroxyl group of the serine supplies its oxygen atom to form the C-terminus of the beta chain, while the remainder of the serine residue undergoes an oxidative deamination to produce ammonia and the pyruvoyl prosthetic group on the alpha chain.

The protein resides in the cell membrane. It catalyses the reaction a 1,2-diacyl-sn-glycero-3-phospho-L-serine + H(+) = a 1,2-diacyl-sn-glycero-3-phosphoethanolamine + CO2. It functions in the pathway phospholipid metabolism; phosphatidylethanolamine biosynthesis; phosphatidylethanolamine from CDP-diacylglycerol: step 2/2. Catalyzes the formation of phosphatidylethanolamine (PtdEtn) from phosphatidylserine (PtdSer). The polypeptide is Phosphatidylserine decarboxylase proenzyme (Brucella abortus (strain S19)).